The chain runs to 142 residues: Large ribosomal subunit protein uL11 (142 aa).

The protein belongs to the universal ribosomal protein uL11 family. Part of the ribosomal stalk of the 50S ribosomal subunit. Interacts with L10 and the large rRNA to form the base of the stalk. L10 forms an elongated spine to which L12 dimers bind in a sequential fashion forming a multimeric L10(L12)X complex. One or more lysine residues are methylated.

Functionally, forms part of the ribosomal stalk which helps the ribosome interact with GTP-bound translation factors. The sequence is that of Large ribosomal subunit protein uL11 from Xanthomonas oryzae pv. oryzae (strain MAFF 311018).